The chain runs to 356 residues: Holliday junction branch migration complex subunit RuvB (356 aa).

The segment at 13–197 is large ATPase domain (RuvB-L); sequence LPPARRMLSA…FGIVARLEFY (185 aa). Residues leucine 36, arginine 37, glycine 78, lysine 81, threonine 82, threonine 83, 144–146, arginine 187, tyrosine 197, and arginine 234 contribute to the ATP site; that span reads EDY. A Mg(2+)-binding site is contributed by threonine 82. Positions 198–268 are small ATPAse domain (RuvB-S); that stretch reads TPEELARIVK…IANRALAMLD (71 aa). The head domain (RuvB-H) stretch occupies residues 271–356; the sequence is PQGFDLMDRK…RGNAENLFEE (86 aa). Arginine 326 and arginine 331 together coordinate DNA.

It belongs to the RuvB family. In terms of assembly, homohexamer. Forms an RuvA(8)-RuvB(12)-Holliday junction (HJ) complex. HJ DNA is sandwiched between 2 RuvA tetramers; dsDNA enters through RuvA and exits via RuvB. An RuvB hexamer assembles on each DNA strand where it exits the tetramer. Each RuvB hexamer is contacted by two RuvA subunits (via domain III) on 2 adjacent RuvB subunits; this complex drives branch migration. In the full resolvosome a probable DNA-RuvA(4)-RuvB(12)-RuvC(2) complex forms which resolves the HJ.

The protein localises to the cytoplasm. It catalyses the reaction ATP + H2O = ADP + phosphate + H(+). In terms of biological role, the RuvA-RuvB-RuvC complex processes Holliday junction (HJ) DNA during genetic recombination and DNA repair, while the RuvA-RuvB complex plays an important role in the rescue of blocked DNA replication forks via replication fork reversal (RFR). RuvA specifically binds to HJ cruciform DNA, conferring on it an open structure. The RuvB hexamer acts as an ATP-dependent pump, pulling dsDNA into and through the RuvAB complex. RuvB forms 2 homohexamers on either side of HJ DNA bound by 1 or 2 RuvA tetramers; 4 subunits per hexamer contact DNA at a time. Coordinated motions by a converter formed by DNA-disengaged RuvB subunits stimulates ATP hydrolysis and nucleotide exchange. Immobilization of the converter enables RuvB to convert the ATP-contained energy into a lever motion, pulling 2 nucleotides of DNA out of the RuvA tetramer per ATP hydrolyzed, thus driving DNA branch migration. The RuvB motors rotate together with the DNA substrate, which together with the progressing nucleotide cycle form the mechanistic basis for DNA recombination by continuous HJ branch migration. Branch migration allows RuvC to scan DNA until it finds its consensus sequence, where it cleaves and resolves cruciform DNA. The sequence is that of Holliday junction branch migration complex subunit RuvB from Polaromonas naphthalenivorans (strain CJ2).